The sequence spans 788 residues: Phenylalanine--tRNA ligase beta subunit (788 aa).

Positions 39-147 (FNVSGEIITA…DPVELGVNVV (109 aa)) constitute a tRNA-binding domain. Residues 399-472 (IEPKKVMLRK…RIYGYEKVES (74 aa)) enclose the B5 domain. D450, D456, E459, and E460 together coordinate Mg(2+). The 94-residue stretch at 694–787 (PRFPAVRRDI…AEREFGIRRR (94 aa)) folds into the FDX-ACB domain.

It belongs to the phenylalanyl-tRNA synthetase beta subunit family. Type 1 subfamily. As to quaternary structure, tetramer of two alpha and two beta subunits. Mg(2+) serves as cofactor.

It localises to the cytoplasm. It carries out the reaction tRNA(Phe) + L-phenylalanine + ATP = L-phenylalanyl-tRNA(Phe) + AMP + diphosphate + H(+). This chain is Phenylalanine--tRNA ligase beta subunit (pheT), found in Thermotoga maritima (strain ATCC 43589 / DSM 3109 / JCM 10099 / NBRC 100826 / MSB8).